Consider the following 83-residue polypeptide: ATP synthase subunit c (83 aa).

2 helical membrane passes run 10 to 30 (IAVA…FGLL) and 52 to 72 (MFIV…IALY).

This sequence belongs to the ATPase C chain family. F-type ATPases have 2 components, F(1) - the catalytic core - and F(0) - the membrane proton channel. F(1) has five subunits: alpha(3), beta(3), gamma(1), delta(1), epsilon(1). F(0) has three main subunits: a(1), b(2) and c(10-14). The alpha and beta chains form an alternating ring which encloses part of the gamma chain. F(1) is attached to F(0) by a central stalk formed by the gamma and epsilon chains, while a peripheral stalk is formed by the delta and b chains.

Its subcellular location is the cell inner membrane. In terms of biological role, f(1)F(0) ATP synthase produces ATP from ADP in the presence of a proton or sodium gradient. F-type ATPases consist of two structural domains, F(1) containing the extramembraneous catalytic core and F(0) containing the membrane proton channel, linked together by a central stalk and a peripheral stalk. During catalysis, ATP synthesis in the catalytic domain of F(1) is coupled via a rotary mechanism of the central stalk subunits to proton translocation. Its function is as follows. Key component of the F(0) channel; it plays a direct role in translocation across the membrane. A homomeric c-ring of between 10-14 subunits forms the central stalk rotor element with the F(1) delta and epsilon subunits. The protein is ATP synthase subunit c of Shewanella amazonensis (strain ATCC BAA-1098 / SB2B).